The chain runs to 109 residues: uncharacterized protein (109 aa).

The tract at residues Y67–R96 is disordered. Polar residues predominate over residues R78–P87.

This is an uncharacterized protein from Saccharomyces cerevisiae (strain ATCC 204508 / S288c) (Baker's yeast).